The following is a 95-amino-acid chain: Glutamine synthetase and cystathionine beta-lyase binding protein (95 aa).

In terms of assembly, interacts with glutamine synthetase (TTHA1329) and cystathionine beta-lyase (TTHA1620), but proteins do not form a ternary complex.

Functionally, binds to glutamine synthetase and cystathionine beta-lyase. May be utilized for the efficient use of nitrogen in the global nitrogen regulation of T.thermophilus. The chain is Glutamine synthetase and cystathionine beta-lyase binding protein from Thermus thermophilus (strain ATCC 27634 / DSM 579 / HB8).